The following is a 473-amino-acid chain: ATP synthase subunit beta (473 aa).

G153–T160 lines the ATP pocket.

This sequence belongs to the ATPase alpha/beta chains family. F-type ATPases have 2 components, CF(1) - the catalytic core - and CF(0) - the membrane proton channel. CF(1) has five subunits: alpha(3), beta(3), gamma(1), delta(1), epsilon(1). CF(0) has three main subunits: a(1), b(2) and c(9-12). The alpha and beta chains form an alternating ring which encloses part of the gamma chain. CF(1) is attached to CF(0) by a central stalk formed by the gamma and epsilon chains, while a peripheral stalk is formed by the delta and b chains.

It is found in the cell inner membrane. It carries out the reaction ATP + H2O + 4 H(+)(in) = ADP + phosphate + 5 H(+)(out). Its function is as follows. Produces ATP from ADP in the presence of a proton gradient across the membrane. The catalytic sites are hosted primarily by the beta subunits. In Rickettsia rickettsii (strain Iowa), this protein is ATP synthase subunit beta.